A 116-amino-acid chain; its full sequence is NADH-quinone oxidoreductase subunit A (116 aa).

Transmembrane regions (helical) follow at residues 3–23 (FTLLVVVLLTAIAFVGVVIAL), 61–81 (FAILFLMFDVETVFLFPWAVI), and 88–108 (QGLISILFFLVVLVLGLAYAW).

Belongs to the complex I subunit 3 family. In terms of assembly, NDH-1 is composed of 14 different subunits. Subunits NuoA, H, J, K, L, M, N constitute the membrane sector of the complex.

The protein resides in the cell inner membrane. It catalyses the reaction a quinone + NADH + 5 H(+)(in) = a quinol + NAD(+) + 4 H(+)(out). Its function is as follows. NDH-1 shuttles electrons from NADH, via FMN and iron-sulfur (Fe-S) centers, to quinones in the respiratory chain. The immediate electron acceptor for the enzyme in this species is believed to be a menaquinone. Couples the redox reaction to proton translocation (for every two electrons transferred, four hydrogen ions are translocated across the cytoplasmic membrane), and thus conserves the redox energy in a proton gradient. In Bacteroides fragilis (strain ATCC 25285 / DSM 2151 / CCUG 4856 / JCM 11019 / LMG 10263 / NCTC 9343 / Onslow / VPI 2553 / EN-2), this protein is NADH-quinone oxidoreductase subunit A.